Consider the following 421-residue polypeptide: Galactooligosaccharide-binding protein (421 aa).

The first 22 residues, 1–22 (MKMAKKCSVFMLCAAVSLSLAA), serve as a signal peptide directing secretion. Residue Cys23 is the site of N-palmitoyl cysteine attachment. Cys23 carries S-diacylglycerol cysteine lipidation. Positions 393-421 (ATGKADPKQALDQAAETAKGQIKAKHSGK) are disordered.

Belongs to the bacterial solute-binding protein 1 family. In terms of assembly, the complex is composed of two ATP-binding proteins (MsmX), two transmembrane proteins (GanP and GanQ) and a solute-binding protein (GanS).

It localises to the cell membrane. In terms of biological role, involved in galactan degradation. Part of the ABC transporter complex GanPQS involved in the uptake of galactooligosaccharides. Binds mainly galactotetraose and galactotriose. In Bacillus subtilis (strain 168), this protein is Galactooligosaccharide-binding protein.